Consider the following 206-residue polypeptide: dITP/XTP pyrophosphatase (206 aa).

10 to 15 (SGNAGK) is a binding site for substrate. Mg(2+) contacts are provided by Glu40 and Asp69. Catalysis depends on Asp69, which acts as the Proton acceptor. Residues Ser70, 148-151 (FGYD), Lys171, and 176-177 (HR) contribute to the substrate site.

The protein belongs to the HAM1 NTPase family. Homodimer. Mg(2+) is required as a cofactor.

The enzyme catalyses XTP + H2O = XMP + diphosphate + H(+). The catalysed reaction is dITP + H2O = dIMP + diphosphate + H(+). It catalyses the reaction ITP + H2O = IMP + diphosphate + H(+). Functionally, pyrophosphatase that catalyzes the hydrolysis of nucleoside triphosphates to their monophosphate derivatives, with a high preference for the non-canonical purine nucleotides XTP (xanthosine triphosphate), dITP (deoxyinosine triphosphate) and ITP. Seems to function as a house-cleaning enzyme that removes non-canonical purine nucleotides from the nucleotide pool, thus preventing their incorporation into DNA/RNA and avoiding chromosomal lesions. This chain is dITP/XTP pyrophosphatase, found in Synechococcus sp. (strain CC9311).